The sequence spans 201 residues: Transgelin (201 aa).

An N-acetylalanine modification is found at Ala-2. The Calponin-homology (CH) domain occupies 24-137; it reads EELEERLVEW…RTVMALGSLA (114 aa). Positions 154 to 161 are could be involved in actin-binding; the sequence is KKAQEHKR. At Ser-166 the chain carries Phosphoserine. Lys-172 carries the N6-acetyllysine modification. The Calponin-like repeat unit spans residues 175–200; the sequence is IGLQMGSNRGASQAGMTGYGRPRQII. Phosphoserine is present on Ser-181. Arg-183 bears the Omega-N-methylarginine mark.

The protein belongs to the calponin family. As to expression, smooth muscle and mesenchymal cells but not in skeletal muscle or lymphocytes.

The protein resides in the cytoplasm. In terms of biological role, actin cross-linking/gelling protein. This chain is Transgelin (Tagln), found in Rattus norvegicus (Rat).